The primary structure comprises 382 residues: Chaperone protein DnaJ (382 aa).

A J domain is found at 5 to 70 (DYYEVLGVSR…DKKAAYDRYG (66 aa)). A CR-type zinc finger spans residues 141–219 (GVQKTINVPA…CHGAGRVEKE (79 aa)). Residues cysteine 154, cysteine 157, cysteine 171, cysteine 174, cysteine 193, cysteine 196, cysteine 207, and cysteine 210 each contribute to the Zn(2+) site. CXXCXGXG motif repeat units follow at residues 154–161 (CDSCKGTG), 171–178 (CPTCSGMG), 193–200 (CPTCNGMG), and 207–214 (CKSCHGAG).

This sequence belongs to the DnaJ family. Homodimer. Zn(2+) serves as cofactor.

It is found in the cytoplasm. Its function is as follows. Participates actively in the response to hyperosmotic and heat shock by preventing the aggregation of stress-denatured proteins and by disaggregating proteins, also in an autonomous, DnaK-independent fashion. Unfolded proteins bind initially to DnaJ; upon interaction with the DnaJ-bound protein, DnaK hydrolyzes its bound ATP, resulting in the formation of a stable complex. GrpE releases ADP from DnaK; ATP binding to DnaK triggers the release of the substrate protein, thus completing the reaction cycle. Several rounds of ATP-dependent interactions between DnaJ, DnaK and GrpE are required for fully efficient folding. Also involved, together with DnaK and GrpE, in the DNA replication of plasmids through activation of initiation proteins. In Cereibacter sphaeroides (strain ATCC 17025 / ATH 2.4.3) (Rhodobacter sphaeroides), this protein is Chaperone protein DnaJ.